We begin with the raw amino-acid sequence, 679 residues long: Methionine--tRNA ligase (679 aa).

The 'HIGH' region motif lies at 14-24 (PYANGSIHLGH). Zn(2+) contacts are provided by Cys-145, Cys-148, Cys-158, and Cys-161. A 'KMSKS' region motif is present at residues 331-335 (KMSKS). An ATP-binding site is contributed by Lys-334. Residues 577–679 (TFAAVDLRIA…NGAKPGQRVM (103 aa)) form the tRNA-binding domain.

It belongs to the class-I aminoacyl-tRNA synthetase family. MetG type 1 subfamily. Homodimer. Requires Zn(2+) as cofactor.

Its subcellular location is the cytoplasm. It catalyses the reaction tRNA(Met) + L-methionine + ATP = L-methionyl-tRNA(Met) + AMP + diphosphate. Functionally, is required not only for elongation of protein synthesis but also for the initiation of all mRNA translation through initiator tRNA(fMet) aminoacylation. This is Methionine--tRNA ligase from Stutzerimonas stutzeri (strain A1501) (Pseudomonas stutzeri).